The following is a 168-amino-acid chain: Large ribosomal subunit protein bL17 (168 aa).

The span at 121 to 146 (AEAEGGEEKAEQKTEKKAAKAKEPKA) shows a compositional bias: basic and acidic residues. Residues 121–168 (AEAEGGEEKAEQKTEKKAAKAKEPKAAKAPKKAAAKPKAKAEKKGAEE) are disordered. The segment covering 148-158 (KAPKKAAAKPK) has biased composition (basic residues). Residues 159 to 168 (AKAEKKGAEE) are compositionally biased toward basic and acidic residues.

This sequence belongs to the bacterial ribosomal protein bL17 family. Part of the 50S ribosomal subunit. Contacts protein L32.

In Anaeromyxobacter sp. (strain Fw109-5), this protein is Large ribosomal subunit protein bL17.